We begin with the raw amino-acid sequence, 538 residues long: Chaperonin GroEL (538 aa).

Residues 29–32 (TLGP), 86–90 (DGTTT), Gly-413, 479–481 (DAL), and Asp-495 each bind ATP.

Belongs to the chaperonin (HSP60) family. In terms of assembly, forms a cylinder of 14 subunits composed of two heptameric rings stacked back-to-back. Interacts with the co-chaperonin GroES.

It localises to the cytoplasm. It carries out the reaction ATP + H2O + a folded polypeptide = ADP + phosphate + an unfolded polypeptide.. Its function is as follows. Together with its co-chaperonin GroES, plays an essential role in assisting protein folding. The GroEL-GroES system forms a nano-cage that allows encapsulation of the non-native substrate proteins and provides a physical environment optimized to promote and accelerate protein folding. This chain is Chaperonin GroEL, found in Fervidobacterium nodosum (strain ATCC 35602 / DSM 5306 / Rt17-B1).